The sequence spans 782 residues: Phosphoribosylformylglycinamidine synthase subunit PurL (782 aa).

The active site involves H48. Residues Y51 and K90 each coordinate ATP. Residue E92 coordinates Mg(2+). Substrate is bound by residues 93 to 96 and R115; that span reads SHNH. The Proton acceptor role is filled by H94. D116 lines the Mg(2+) pocket. A substrate-binding site is contributed by Q239. D267 serves as a coordination point for Mg(2+). Substrate is bound at residue 311 to 313; that stretch reads ESQ. D525 and G562 together coordinate ATP. N563 lines the Mg(2+) pocket. S565 is a substrate binding site.

This sequence belongs to the FGAMS family. In terms of assembly, monomer. Part of the FGAM synthase complex composed of 1 PurL, 1 PurQ and 2 PurS subunits.

Its subcellular location is the cytoplasm. The enzyme catalyses N(2)-formyl-N(1)-(5-phospho-beta-D-ribosyl)glycinamide + L-glutamine + ATP + H2O = 2-formamido-N(1)-(5-O-phospho-beta-D-ribosyl)acetamidine + L-glutamate + ADP + phosphate + H(+). Its pathway is purine metabolism; IMP biosynthesis via de novo pathway; 5-amino-1-(5-phospho-D-ribosyl)imidazole from N(2)-formyl-N(1)-(5-phospho-D-ribosyl)glycinamide: step 1/2. Part of the phosphoribosylformylglycinamidine synthase complex involved in the purines biosynthetic pathway. Catalyzes the ATP-dependent conversion of formylglycinamide ribonucleotide (FGAR) and glutamine to yield formylglycinamidine ribonucleotide (FGAM) and glutamate. The FGAM synthase complex is composed of three subunits. PurQ produces an ammonia molecule by converting glutamine to glutamate. PurL transfers the ammonia molecule to FGAR to form FGAM in an ATP-dependent manner. PurS interacts with PurQ and PurL and is thought to assist in the transfer of the ammonia molecule from PurQ to PurL. This Nostoc sp. (strain PCC 7120 / SAG 25.82 / UTEX 2576) protein is Phosphoribosylformylglycinamidine synthase subunit PurL.